The following is a 589-amino-acid chain: Transcription factor 4 (589 aa).

6 disordered regions span residues 1-124 (MTSR…SSSK), 138-163 (DGHH…MLGN), 184-239 (PSHS…SQTG), 254-297 (HTNN…EGPL), 384-492 (SLLP…MANN), and 556-589 (KRRE…MGQM). Serine 8 and serine 13 each carry phosphoserine. Over residues 56–74 (GTLSPTKPGSQYYPYSSNN) the composition is skewed to polar residues. Residues 136–157 (MQDGHHSSDPWSSSSGMNQPGY) form a leucine-zipper region. Polar residues predominate over residues 184–224 (PSHSSADINSSLPPMSTFHRSGTNHYSTSSCTPPANGTDSI). The span at 255–266 (TNNSFSSNPSTP) shows a compositional bias: low complexity. Over residues 283-292 (NGGQASSSPN) the composition is skewed to polar residues. A Phosphoserine modification is found at serine 290. The tract at residues 380-403 (RGSHSLLPNQVPVPQLPVQSATSP) is class A specific domain. 2 stretches are compositionally biased toward low complexity: residues 385–398 (LLPN…LPVQ) and 421–430 (GQSVSSGSSE). At serine 433 the chain carries Phosphoserine. Basic and acidic residues-rich tracts occupy residues 445–461 (KSSE…DIKS) and 477–492 (PEQK…MANN). Positions 486–539 (ERRMANNARERLRVRDINEAFKELGRMVQLHLKSDKPQTKLLILHQAVAVILSL) constitute a bHLH domain.

In terms of assembly, efficient DNA binding requires dimerization with another bHLH protein. Forms homo- or heterooligomers with myogenin. Interacts with HIVEP2. Interacts with NEUROD2. Interacts with AGBL1.

It is found in the nucleus. Its function is as follows. Transcription factor that binds to the immunoglobulin enhancer Mu-E5/KE5-motif. Involved in the initiation of neuronal differentiation. Activates transcription by binding to the E box (5'-CANNTG-3'). Binds to the E-box present in the somatostatin receptor 2 initiator element (SSTR2-INR) to activate transcription. Interacts with the CCAAT displacement protein (CDP2) to bind the tyrosine hydroxylase enhancer. The protein is Transcription factor 4 (Tcf4) of Rattus norvegicus (Rat).